A 389-amino-acid polypeptide reads, in one-letter code: Transaldolase (389 aa).

The active-site Schiff-base intermediate with substrate is the lysine 136. EF-hand domains lie at 330–365 and 365–388; these read ALNQ…FDAI and IDLN…VSKL. 9 residues coordinate Ca(2+): aspartate 343, aspartate 345, aspartate 347, glutamate 354, aspartate 366, asparagine 368, aspartate 370, lysine 372, and glutamate 377.

The protein belongs to the transaldolase family. Type 1 subfamily.

The protein localises to the cytoplasm. The enzyme catalyses D-sedoheptulose 7-phosphate + D-glyceraldehyde 3-phosphate = D-erythrose 4-phosphate + beta-D-fructose 6-phosphate. It participates in carbohydrate degradation; pentose phosphate pathway; D-glyceraldehyde 3-phosphate and beta-D-fructose 6-phosphate from D-ribose 5-phosphate and D-xylulose 5-phosphate (non-oxidative stage): step 2/3. In terms of biological role, transaldolase is important for the balance of metabolites in the pentose-phosphate pathway. This chain is Transaldolase, found in Gloeobacter violaceus (strain ATCC 29082 / PCC 7421).